The following is a 98-amino-acid chain: Keratin-associated protein 3-3 (98 aa).

Alanine 2 carries the N-acetylalanine modification. 3 consecutive repeat copies span residues 3 to 7 (CCAPL), 8 to 12 (CCSAR), and 47 to 51 (CCDNC). A 3 X 5 AA repeats of C-C-X(3) region spans residues 3-59 (CCAPLCCSARTSPATTICSSDKFCRCGVCLPSTCPHTVWLLEPTCCDNCPPPCHIPQ).

It belongs to the KRTAP type 3 family. Interacts with hair keratins.

Its function is as follows. In the hair cortex, hair keratin intermediate filaments are embedded in an interfilamentous matrix, consisting of hair keratin-associated proteins (KRTAP), which are essential for the formation of a rigid and resistant hair shaft through their extensive disulfide bond cross-linking with abundant cysteine residues of hair keratins. The matrix proteins include the high-sulfur and high-glycine-tyrosine keratins. This is Keratin-associated protein 3-3 from Bos taurus (Bovine).